The sequence spans 511 residues: Cobyric acid synthase (511 aa).

Residues 251-443 enclose the GATase cobBQ-type domain; sequence LLDIAIICLP…IHGIFDNDVF (193 aa). C332 acts as the Nucleophile in catalysis. Residue H435 is part of the active site.

Belongs to the CobB/CobQ family. CobQ subfamily.

The protein operates within cofactor biosynthesis; adenosylcobalamin biosynthesis. In terms of biological role, catalyzes amidations at positions B, D, E, and G on adenosylcobyrinic A,C-diamide. NH(2) groups are provided by glutamine, and one molecule of ATP is hydrogenolyzed for each amidation. In Listeria monocytogenes serovar 1/2a (strain ATCC BAA-679 / EGD-e), this protein is Cobyric acid synthase.